A 443-amino-acid polypeptide reads, in one-letter code: Nitrate/nitrite binding protein NrtA (443 aa).

A signal peptide spans 1-25; the sequence is MSQFSRRKFLLTAGGTAAAALWLNA. Residue C26 is the site of N-palmitoyl cysteine attachment. C26 carries the S-diacylglycerol cysteine lipid modification. Residues 31 to 46 are compositionally biased toward low complexity; it reads SSTDTTGSTSTPAPSG. Residues 31-52 are disordered; the sequence is SSTDTTGSTSTPAPSGTSGGDA. The nitrate site is built by W96, Q150, H195, G239, and K268.

It belongs to the CmpA/NrtA family. The complex is composed of two ATP-binding proteins (NrtC and NrtD), two transmembrane proteins (NrtB) and a solute-binding protein (NrtA). NrtA can form homotrimers. Post-translationally, the N-terminus is blocked.

The protein localises to the cell inner membrane. In terms of biological role, part of the ABC transporter complex NrtABCD involved in nitrate uptake. The complex is probably also involved in nitrite transport. NrtA is the substrate-binding protein. Binds both nitrate and nitrite with high affinity. This chain is Nitrate/nitrite binding protein NrtA, found in Synechococcus elongatus (strain ATCC 33912 / PCC 7942 / FACHB-805) (Anacystis nidulans R2).